The following is a 747-amino-acid chain: Kinesin-like protein KIF3B (747 aa).

Residue methionine 1 is modified to N-acetylmethionine. Serine 2 is modified (N-acetylserine; in Kinesin-like protein KIF3B, N-terminally processed). One can recognise a Kinesin motor domain in the interval 9-340 (SVRVVVRCRP…LRYANRAKNI (332 aa)). Position 96-103 (96-103 (GQTGTGKT)) interacts with ATP. Residues 346 to 579 (VNEDPKDALL…EQTQNELTRE (234 aa)) are a coiled coil. 2 disordered regions span residues 374–412 (IGRRKRREKRREGGGSGGGGEEEEEEGEEGEEEGDDKDD) and 699–747 (QVDA…LVPK). Residues 393-411 (GEEEEEEGEEGEEEGDDKD) show a composition bias toward acidic residues. The globular stretch occupies residues 580 to 747 (LKLKHLIIEN…YPQSRGLVPK (168 aa)). The span at 701-710 (DASSFESTAN) shows a compositional bias: polar residues. Over residues 711–721 (KKSKARPKSGR) the composition is skewed to basic residues. The segment covering 722 to 735 (KSGSSSSSSGTPAS) has biased composition (low complexity).

Belongs to the TRAFAC class myosin-kinesin ATPase superfamily. Kinesin family. Kinesin II subfamily. In terms of assembly, heterodimer of KIF3A and KIF3B. KIF3A/KIF3B heterodimer interacts with KIFAP3 forming a heterotrimeric (KIF3A/KIF3B/KIFAP3) complex. Interacts directly with IFT20. Interacts with the SMC3 subunit of the cohesin complex. Interacts with FLCN.

The protein resides in the cytoplasm. It is found in the cytoskeleton. The protein localises to the cell projection. It localises to the cilium. Its subcellular location is the dendritic spine. Its function is as follows. Microtubule-based molecular motor that transport intracellular cargos, such as vesicles, organelles and protein complexes. Uses ATP hydrolysis to generate force to bind and move along the microtubule. Plays a role in cilia formation. Involved in photoreceptor integrity and opsin trafficking in rod photoreceptors. Transports vesicles containing N-methyl-D-aspartate (NMDA) receptor subunit GRIN2A into neuronal dendrites. The protein is Kinesin-like protein KIF3B (KIF3B) of Homo sapiens (Human).